The chain runs to 296 residues: Alpha/beta-gliadin clone PW1215 (296 aa).

Residues 1 to 20 (MKTFLILALLAIVATTATTA) form the signal peptide. Disordered stretches follow at residues 24–126 (PVPQ…QAQQ) and 220–255 (SSQV…VQPQ). The span at 25-36 (VPQPQPQNPSQP) shows a compositional bias: pro residues. The segment covering 37 to 58 (QPQGQVPLVQQQQFPGQQQQFP) has biased composition (low complexity). Pro residues-rich tracts occupy residues 59 to 71 (PQQP…PFPS) and 81 to 116 (FPQP…PQPQ). 2 stretches are compositionally biased toward low complexity: residues 117–126 (QPISQQQAQQ) and 220–241 (SSQV…FFQP). Over residues 242–255 (SQQNPQAQGSVQPQ) the composition is skewed to polar residues.

It belongs to the gliadin/glutenin family. Substrate of transglutaminase.

In terms of biological role, gliadin is the major seed storage protein in wheat. This Triticum aestivum (Wheat) protein is Alpha/beta-gliadin clone PW1215.